Here is a 72-residue protein sequence, read N- to C-terminus: Translation initiation factor IF-1 (72 aa).

In terms of domain architecture, S1-like spans 1-72 (MAKEDVIEFS…TKGRITFRYK (72 aa)).

It belongs to the IF-1 family. In terms of assembly, component of the 30S ribosomal translation pre-initiation complex which assembles on the 30S ribosome in the order IF-2 and IF-3, IF-1 and N-formylmethionyl-tRNA(fMet); mRNA recruitment can occur at any time during PIC assembly.

The protein resides in the cytoplasm. In terms of biological role, one of the essential components for the initiation of protein synthesis. Stabilizes the binding of IF-2 and IF-3 on the 30S subunit to which N-formylmethionyl-tRNA(fMet) subsequently binds. Helps modulate mRNA selection, yielding the 30S pre-initiation complex (PIC). Upon addition of the 50S ribosomal subunit IF-1, IF-2 and IF-3 are released leaving the mature 70S translation initiation complex. This is Translation initiation factor IF-1 from Paramagnetospirillum magneticum (strain ATCC 700264 / AMB-1) (Magnetospirillum magneticum).